A 73-amino-acid chain; its full sequence is Small ribosomal subunit protein bS18c (73 aa).

This sequence belongs to the bacterial ribosomal protein bS18 family. In terms of assembly, part of the 30S ribosomal subunit.

It is found in the plastid. Its subcellular location is the chloroplast. The polypeptide is Small ribosomal subunit protein bS18c (rps18) (Guillardia theta (Cryptophyte)).